Consider the following 907-residue polypeptide: Alanine--tRNA ligase (907 aa).

Zn(2+)-binding residues include His-602, His-606, Cys-706, and His-710.

This sequence belongs to the class-II aminoacyl-tRNA synthetase family. Requires Zn(2+) as cofactor.

It is found in the cytoplasm. The enzyme catalyses tRNA(Ala) + L-alanine + ATP = L-alanyl-tRNA(Ala) + AMP + diphosphate. In terms of biological role, catalyzes the attachment of alanine to tRNA(Ala) in a two-step reaction: alanine is first activated by ATP to form Ala-AMP and then transferred to the acceptor end of tRNA(Ala). Also edits incorrectly charged Ser-tRNA(Ala) and Gly-tRNA(Ala) via its editing domain. In Thermofilum pendens (strain DSM 2475 / Hrk 5), this protein is Alanine--tRNA ligase.